We begin with the raw amino-acid sequence, 471 residues long: 7-dehydrocholesterol reductase (471 aa).

A disordered region spans residues 1–23 (MASKSQHNAPKVKSPNGKAGSQG). At Ser-14 the chain carries Phosphoserine. The next 8 helical transmembrane spans lie at 36–56 (LASI…FIMA), 95–115 (LYAL…DFCH), 144–164 (LQAW…LSWF), 173–193 (WIPL…FAMI), 233–253 (LFFN…SFAA), 262–282 (VTNS…DFFW), 302–322 (LGWG…LYLV), and 327–347 (QLST…YYIF). NADP(+) contacts are provided by residues Lys-354, Arg-358, Leu-391, Trp-396, and 403–404 (NY). A helical transmembrane segment spans residues 416-436 (LACGGGHLLPYFYIIYMTILL). NADP(+) is bound by residues Asp-443, 447-451 (CANKY), and Tyr-458.

The protein belongs to the ERG4/ERG24 family. As to quaternary structure, interacts with DHCR24; this interaction regulates DHCR7 activity. Interacts with TMEM147.

Its subcellular location is the endoplasmic reticulum membrane. The catalysed reaction is cholesterol + NADP(+) = 7-dehydrocholesterol + NADPH + H(+). The enzyme catalyses 7-dehydrodesmosterol + NADPH + H(+) = desmosterol + NADP(+). It carries out the reaction 5,6alpha-epoxy-5alpha-cholestan-3beta-ol + H2O = 5alpha-cholestane-3beta,5,6beta-triol. It catalyses the reaction 5,6beta-epoxy-5beta-cholestan-3beta-ol + H2O = 5alpha-cholestane-3beta,5,6beta-triol. It functions in the pathway steroid biosynthesis; cholesterol biosynthesis. Functionally, oxidoreductase that catalyzes the last step of the cholesterol synthesis pathway, which transforms cholesta-5,7-dien-3beta-ol (7-dehydrocholesterol,7-DHC) into cholesterol by reducing the C7-C8 double bond of its sterol core. Can also metabolize cholesta-5,7,24-trien-3beta-ol (7-dehydrodemosterol, 7-DHD) to desmosterol, which is then metabolized by the Delta(24)-sterol reductase (DHCR24) to cholesterol. Modulates ferroptosis (a form of regulated cell death driven by iron-dependent lipid peroxidation) through the metabolic breakdown of the anti-ferroptotic metabolites 7-DHC and 7-DHD which, when accumulated, divert the propagation of peroxyl radical-mediated damage from phospholipid components to its sterol core, protecting plasma and mitochondrial membranes from phospholipid autoxidation. Its function is as follows. Component of the microsomal antiestrogen binding site (AEBS), a multiproteic complex at the ER membrane that consists of an association between cholestenol Delta-isomerase/EBP and DHCR7. This complex is responsible for cholesterol-5,6-epoxide hydrolase (ChEH) activity, which consists in the hydration of cholesterol-5,6-epoxides (5,6-EC) into cholestane-3beta,5alpha,6beta-triol (CT). The precise role of each component of this complex has not been described yet. This is 7-dehydrocholesterol reductase (Dhcr7) from Mus musculus (Mouse).